We begin with the raw amino-acid sequence, 328 residues long: Sulfate adenylyltransferase subunit 2 (328 aa).

The interval 309-328 (RAIDKDQTASMEKKKQEGYF) is disordered.

The protein belongs to the PAPS reductase family. CysD subfamily. Heterodimer composed of CysD, the smaller subunit, and CysN.

It catalyses the reaction sulfate + ATP + H(+) = adenosine 5'-phosphosulfate + diphosphate. It functions in the pathway sulfur metabolism; hydrogen sulfide biosynthesis; sulfite from sulfate: step 1/3. Its function is as follows. With CysN forms the ATP sulfurylase (ATPS) that catalyzes the adenylation of sulfate producing adenosine 5'-phosphosulfate (APS) and diphosphate, the first enzymatic step in sulfur assimilation pathway. APS synthesis involves the formation of a high-energy phosphoric-sulfuric acid anhydride bond driven by GTP hydrolysis by CysN coupled to ATP hydrolysis by CysD. The polypeptide is Sulfate adenylyltransferase subunit 2 (Hyphomonas neptunium (strain ATCC 15444)).